The primary structure comprises 296 residues: Protoheme IX farnesyltransferase (296 aa).

Transmembrane regions (helical) follow at residues 11 to 31 (PGIIFGNLISVIGGFLLAAQG), 35 to 55 (YPLFLATLVGVSLVVASGCVF), 84 to 104 (VTLVYASLLGIAGFALLYIAA), 107 to 127 (LAMWLAVMGFVVYVGVYSLYM), 132 to 152 (VYGTLIGSLSGAAPPVIGYCA), 162 to 182 (LILLLIFSLWQMPHSYAIAIF), 208 to 228 (ITLYIVAFAVATLMLSLGGYA), 229 to 249 (GYKYLIVAAAVSVWWLGMALS), and 264 to 284 (LFVFSIVAITSLSVMMSVDSM).

Belongs to the UbiA prenyltransferase family. Protoheme IX farnesyltransferase subfamily.

The protein resides in the cell inner membrane. It carries out the reaction heme b + (2E,6E)-farnesyl diphosphate + H2O = Fe(II)-heme o + diphosphate. Its pathway is porphyrin-containing compound metabolism; heme O biosynthesis; heme O from protoheme: step 1/1. Converts heme B (protoheme IX) to heme O by substitution of the vinyl group on carbon 2 of heme B porphyrin ring with a hydroxyethyl farnesyl side group. The protein is Protoheme IX farnesyltransferase of Pectobacterium carotovorum subsp. carotovorum (strain PC1).